We begin with the raw amino-acid sequence, 272 residues long: Shikimate dehydrogenase (NADP(+)) (272 aa).

Shikimate is bound by residues 14–16 (SLS) and threonine 61. Lysine 65 (proton acceptor) is an active-site residue. Aspartate 102 is a shikimate binding site. NADP(+) is bound by residues 127–131 (GAGGA), 151–156 (NRTPSK), and leucine 215. Residue tyrosine 217 participates in shikimate binding. Residue glycine 239 coordinates NADP(+).

This sequence belongs to the shikimate dehydrogenase family. Homodimer.

The enzyme catalyses shikimate + NADP(+) = 3-dehydroshikimate + NADPH + H(+). The protein operates within metabolic intermediate biosynthesis; chorismate biosynthesis; chorismate from D-erythrose 4-phosphate and phosphoenolpyruvate: step 4/7. Functionally, involved in the biosynthesis of the chorismate, which leads to the biosynthesis of aromatic amino acids. Catalyzes the reversible NADPH linked reduction of 3-dehydroshikimate (DHSA) to yield shikimate (SA). This is Shikimate dehydrogenase (NADP(+)) from Coxiella burnetii (strain CbuK_Q154) (Coxiella burnetii (strain Q154)).